A 240-amino-acid chain; its full sequence is MLRSCAARLRTLGALCLPPVGRRLPGSEPRPELRSFSSEEVILKDCSVPNPSWNKDLRLLFDQFMKKCEDGSWKRLPSYKRTPTEWIQDFKTHFLDPKLMKEEQMSQAQLFTRSFDDGLGFEYVMFYNDIEKRMVCLFQGGPYLEGPPGFIHGGAIATMIDATVGMCAMMAGGIVMTANLNINYKRPIPLCSVVMINSQLDKVEGRKFFVSCNVQSVDEKTLYSEATSLFIKLNPAKSLT.

The transit peptide at 1–36 directs the protein to the mitochondrion; that stretch reads MLRSCAARLRTLGALCLPPVGRRLPGSEPRPELRSF. 2 positions are modified to phosphoserine: serine 37 and serine 38. N6-succinyllysine occurs at positions 55 and 66. Lysine 74 is modified (N6-acetyllysine). At lysine 98 the chain carries N6-succinyllysine. Aspartate 161 (proton donor/acceptor) is an active-site residue. Substrate-binding positions include asparagine 183, lysine 185, and 206 to 207; that span reads RK. Lysine 207 carries the post-translational modification N6-succinyllysine.

The protein belongs to the THEM4/THEM5 thioesterase family. As to quaternary structure, homodimer and homotetramer. Interacts with AKT1 in the cytosol. Post-translationally, phosphorylated. In terms of tissue distribution, expressed predominantly in skeletal muscle, testis, uterus, brain and kidney. Down-regulated in glioblastoma or glioma compared to non-neoplastic brain due to promoter hypermethylation.

The protein localises to the cell membrane. The protein resides in the cell projection. It is found in the ruffle membrane. It localises to the cytoplasm. Its subcellular location is the mitochondrion. The protein localises to the mitochondrion inner membrane. The protein resides in the mitochondrion intermembrane space. The catalysed reaction is hexadecanoyl-CoA + H2O = hexadecanoate + CoA + H(+). The enzyme catalyses octanoyl-CoA + H2O = octanoate + CoA + H(+). It carries out the reaction decanoyl-CoA + H2O = decanoate + CoA + H(+). It catalyses the reaction dodecanoyl-CoA + H2O = dodecanoate + CoA + H(+). The catalysed reaction is tetradecanoyl-CoA + H2O = tetradecanoate + CoA + H(+). The enzyme catalyses (9Z)-octadecenoyl-CoA + H2O = (9Z)-octadecenoate + CoA + H(+). It carries out the reaction (5Z,8Z,11Z,14Z)-eicosatetraenoyl-CoA + H2O = (5Z,8Z,11Z,14Z)-eicosatetraenoate + CoA + H(+). Functionally, has acyl-CoA thioesterase activity towards medium and long-chain (C14 to C18) fatty acyl-CoA substrates, and probably plays a role in mitochondrial fatty acid metabolism. Plays a role in the apoptotic process, possibly via its regulation of AKT1 activity. According to PubMed:11598301, inhibits AKT1 phosphorylation and activity. According to PubMed:17615157, enhances AKT1 activity by favoring its phosphorylation and translocation to plasma membrane. This Homo sapiens (Human) protein is Acyl-coenzyme A thioesterase THEM4 (THEM4).